A 573-amino-acid chain; its full sequence is Membrane protein insertase YidC (573 aa).

6 consecutive transmembrane segments (helical) span residues 6–26 (VFLI…WGKD), 355–375 (FSIM…LHSF), 379–399 (WGWA…PLSA), 446–466 (GGCL…WVLV), 488–508 (PYFI…KLTP), and 524–544 (PLVF…YWVV).

Belongs to the OXA1/ALB3/YidC family. Type 1 subfamily. As to quaternary structure, interacts with the Sec translocase complex via SecD. Specifically interacts with transmembrane segments of nascent integral membrane proteins during membrane integration.

The protein localises to the cell inner membrane. Its function is as follows. Required for the insertion and/or proper folding and/or complex formation of integral membrane proteins into the membrane. Involved in integration of membrane proteins that insert both dependently and independently of the Sec translocase complex, as well as at least some lipoproteins. Aids folding of multispanning membrane proteins. The sequence is that of Membrane protein insertase YidC from Xanthomonas campestris pv. campestris (strain ATCC 33913 / DSM 3586 / NCPPB 528 / LMG 568 / P 25).